The following is a 223-amino-acid chain: Phosphoribosylformylglycinamidine synthase subunit PurQ (223 aa).

Residues 3–223 (SAVILLPGLN…LFAGALGITA (221 aa)) form the Glutamine amidotransferase type-1 domain. The active-site Nucleophile is the Cys-87. Active-site residues include His-197 and Glu-199.

In terms of assembly, part of the FGAM synthase complex composed of 1 PurL, 1 PurQ and 2 PurS subunits.

Its subcellular location is the cytoplasm. The enzyme catalyses N(2)-formyl-N(1)-(5-phospho-beta-D-ribosyl)glycinamide + L-glutamine + ATP + H2O = 2-formamido-N(1)-(5-O-phospho-beta-D-ribosyl)acetamidine + L-glutamate + ADP + phosphate + H(+). The catalysed reaction is L-glutamine + H2O = L-glutamate + NH4(+). It participates in purine metabolism; IMP biosynthesis via de novo pathway; 5-amino-1-(5-phospho-D-ribosyl)imidazole from N(2)-formyl-N(1)-(5-phospho-D-ribosyl)glycinamide: step 1/2. Part of the phosphoribosylformylglycinamidine synthase complex involved in the purines biosynthetic pathway. Catalyzes the ATP-dependent conversion of formylglycinamide ribonucleotide (FGAR) and glutamine to yield formylglycinamidine ribonucleotide (FGAM) and glutamate. The FGAM synthase complex is composed of three subunits. PurQ produces an ammonia molecule by converting glutamine to glutamate. PurL transfers the ammonia molecule to FGAR to form FGAM in an ATP-dependent manner. PurS interacts with PurQ and PurL and is thought to assist in the transfer of the ammonia molecule from PurQ to PurL. In Brucella abortus biovar 1 (strain 9-941), this protein is Phosphoribosylformylglycinamidine synthase subunit PurQ.